The sequence spans 158 residues: NADH-quinone oxidoreductase subunit B 1 (158 aa).

Positions 37, 38, 102, and 132 each coordinate [4Fe-4S] cluster.

The protein belongs to the complex I 20 kDa subunit family. NDH-1 is composed of 14 different subunits. Subunits NuoB, C, D, E, F, and G constitute the peripheral sector of the complex. [4Fe-4S] cluster is required as a cofactor.

Its subcellular location is the cell inner membrane. The catalysed reaction is a quinone + NADH + 5 H(+)(in) = a quinol + NAD(+) + 4 H(+)(out). Functionally, NDH-1 shuttles electrons from NADH, via FMN and iron-sulfur (Fe-S) centers, to quinones in the respiratory chain. Couples the redox reaction to proton translocation (for every two electrons transferred, four hydrogen ions are translocated across the cytoplasmic membrane), and thus conserves the redox energy in a proton gradient. This is NADH-quinone oxidoreductase subunit B 1 from Chromobacterium violaceum (strain ATCC 12472 / DSM 30191 / JCM 1249 / CCUG 213 / NBRC 12614 / NCIMB 9131 / NCTC 9757 / MK).